A 127-amino-acid polypeptide reads, in one-letter code: Aspartate 1-decarboxylase (127 aa).

Residue serine 25 is the Schiff-base intermediate with substrate; via pyruvic acid of the active site. Pyruvic acid (Ser) is present on serine 25. Substrate is bound at residue threonine 57. Tyrosine 58 serves as the catalytic Proton donor. 73-75 (GAA) provides a ligand contact to substrate.

The protein belongs to the PanD family. As to quaternary structure, heterooctamer of four alpha and four beta subunits. Pyruvate serves as cofactor. Is synthesized initially as an inactive proenzyme, which is activated by self-cleavage at a specific serine bond to produce a beta-subunit with a hydroxyl group at its C-terminus and an alpha-subunit with a pyruvoyl group at its N-terminus.

The protein localises to the cytoplasm. The enzyme catalyses L-aspartate + H(+) = beta-alanine + CO2. Its pathway is cofactor biosynthesis; (R)-pantothenate biosynthesis; beta-alanine from L-aspartate: step 1/1. Catalyzes the pyruvoyl-dependent decarboxylation of aspartate to produce beta-alanine. This Bacillus cereus (strain 03BB102) protein is Aspartate 1-decarboxylase.